The sequence spans 459 residues: MLTLNSTIKSVTGSFQSASMLARFASTHHKVLVVGGGSAGISVAHQIYNKFSKYRFANDQGKDTSLKPGEIGIVDGAKYHYYQPGWTLTGAGLSSVAKTRRELASLVPADKFKLHPEFVKSLHPRENKIVTQSGQEISYDYLVMAAGIYTDFGRIKGLTEALDDPNTPVVTIYSEKYADAVYPWIEKTKSGNAIFTQPSGVLKCAGAPQKIMWMAEDYWRRHKVRSNIDVSFYTGMPTLFSVKRYSDALLRQNEQLHRNVKINYKDELVEVKGSERKAVFKNLNDGSLFERPFDLLHAVPSMRSHEFIAKSDLADKSGFVAVDQSTTQSTKFPNVFAIGDCSGLPTSKTYAAITAQAPVMVHNLWSFVNGKNLTASYNGYTSCPLLTGYGKLILAEFLYKQEPKESFGRFSRFLDQTVPRRMFYHLKKDFFPFVYWNFAVRNGKWYGSRGLIPPHFPVN.

A mitochondrion-targeting transit peptide spans 1 to 24; that stretch reads MLTLNSTIKSVTGSFQSASMLARF. 35–39 contributes to the FAD binding site; that stretch reads GGGSA. Active-site cysteine persulfide intermediate residues include cysteine 204 and cysteine 383.

This sequence belongs to the SQRD family. FAD is required as a cofactor.

The protein resides in the mitochondrion. In terms of biological role, catalyzes the oxidation of hydrogen sulfide, with the help of a quinone. This Schizosaccharomyces pombe (strain 972 / ATCC 24843) (Fission yeast) protein is Sulfide:quinone oxidoreductase, mitochondrial (hmt2).